The chain runs to 492 residues: MKYKDLRDFIAMLEQQGKLKRIAHPVSPHLEMTEIADRVLRAEGPALLFENPVKPDGTRYGYPVLANLFGTPERVAMGMGADSVSKLREIGQTLAYLKEPEPPKGIKDAFSKLPLLKDIWSMAPNVVKNAPCQEIVWEGENVDLYKLPIQHCWPEDVAPLVTWGLTVTRGPHKKRQNLGIYRQQLIGKNKLIMRWLSHRGGALDYQEFRKLNPDTPYPVAVVLGCDPATILGAVTPVPDTLSEYQFAGLLRGSRTELVKCIGNDLQVPARAEIVLEGVIHPNETALEGPYGDHTGYYNEQDHFPVFTVERITMRENPIYHSTYTGKPPDEPAVLGVALNEVFVPLLQKQFPEITDFYLPPEGCSYRMAVVSMKKQYAGHAKRVMMGCWSFLRQFMYTKFIIVVDDDVNVRDWKEVIWAVTTRMDPVRDTVLVENTPIDYLDFASPVSGLGGKMGLDATNKWPGETDREWGRVIKKDPAVTAKIDGIWEELGL.

Asparagine 177 serves as a coordination point for Mn(2+). Prenylated FMN contacts are provided by residues 180 to 182 (IYR), 194 to 196 (RWL), and 199 to 200 (RG). Glutamate 243 lines the Mn(2+) pocket. Aspartate 292 acts as the Proton donor in catalysis.

This sequence belongs to the UbiD family. Homohexamer. Requires prenylated FMN as cofactor. It depends on Mn(2+) as a cofactor.

The protein resides in the cell membrane. It carries out the reaction a 4-hydroxy-3-(all-trans-polyprenyl)benzoate + H(+) = a 2-(all-trans-polyprenyl)phenol + CO2. The protein operates within cofactor biosynthesis; ubiquinone biosynthesis. Its function is as follows. Catalyzes the decarboxylation of 3-octaprenyl-4-hydroxy benzoate to 2-octaprenylphenol, an intermediate step in ubiquinone biosynthesis. The chain is 3-octaprenyl-4-hydroxybenzoate carboxy-lyase from Neisseria meningitidis serogroup C / serotype 2a (strain ATCC 700532 / DSM 15464 / FAM18).